Reading from the N-terminus, the 101-residue chain is NAD(P)H-quinone oxidoreductase subunit 4L, chloroplastic (101 aa).

The next 3 helical transmembrane spans lie at 2–22, 32–52, and 61–81; these read IFEH…YGLI, MCLE…SDFF, and IFSI…PAIV.

This sequence belongs to the complex I subunit 4L family. As to quaternary structure, NDH is composed of at least 16 different subunits, 5 of which are encoded in the nucleus.

The protein resides in the plastid. It is found in the chloroplast thylakoid membrane. It catalyses the reaction a plastoquinone + NADH + (n+1) H(+)(in) = a plastoquinol + NAD(+) + n H(+)(out). The catalysed reaction is a plastoquinone + NADPH + (n+1) H(+)(in) = a plastoquinol + NADP(+) + n H(+)(out). In terms of biological role, NDH shuttles electrons from NAD(P)H:plastoquinone, via FMN and iron-sulfur (Fe-S) centers, to quinones in the photosynthetic chain and possibly in a chloroplast respiratory chain. The immediate electron acceptor for the enzyme in this species is believed to be plastoquinone. Couples the redox reaction to proton translocation, and thus conserves the redox energy in a proton gradient. In Phaseolus vulgaris (Kidney bean), this protein is NAD(P)H-quinone oxidoreductase subunit 4L, chloroplastic.